A 255-amino-acid chain; its full sequence is UDP-2,3-diacylglucosamine hydrolase (255 aa).

Mn(2+)-binding residues include aspartate 8, histidine 10, aspartate 41, asparagine 79, and histidine 114. Residue 79–80 (NR) participates in substrate binding. Residues aspartate 122, serine 160, asparagine 164, lysine 167, and histidine 195 each coordinate substrate. Residues histidine 195 and histidine 197 each contribute to the Mn(2+) site.

It belongs to the LpxH family. Mn(2+) is required as a cofactor.

It is found in the cell inner membrane. The enzyme catalyses UDP-2-N,3-O-bis[(3R)-3-hydroxytetradecanoyl]-alpha-D-glucosamine + H2O = 2-N,3-O-bis[(3R)-3-hydroxytetradecanoyl]-alpha-D-glucosaminyl 1-phosphate + UMP + 2 H(+). It functions in the pathway glycolipid biosynthesis; lipid IV(A) biosynthesis; lipid IV(A) from (3R)-3-hydroxytetradecanoyl-[acyl-carrier-protein] and UDP-N-acetyl-alpha-D-glucosamine: step 4/6. Functionally, hydrolyzes the pyrophosphate bond of UDP-2,3-diacylglucosamine to yield 2,3-diacylglucosamine 1-phosphate (lipid X) and UMP by catalyzing the attack of water at the alpha-P atom. Involved in the biosynthesis of lipid A, a phosphorylated glycolipid that anchors the lipopolysaccharide to the outer membrane of the cell. The polypeptide is UDP-2,3-diacylglucosamine hydrolase (Hamiltonella defensa subsp. Acyrthosiphon pisum (strain 5AT)).